The following is a 282-amino-acid chain: Blarina toxin (282 aa).

A signal peptide spans 1–17; it reads MCFLLLCLTLTLAGTGA. The propeptide at 18–29 is activation peptide; the sequence is VPTGPSIEIHSR. The Peptidase S1 domain maps to 30-279; sequence IIGGWECDKH…YISWIQETIK (250 aa). 5 disulfide bridges follow: cysteine 36/cysteine 194, cysteine 57/cysteine 73, cysteine 170/cysteine 240, cysteine 205/cysteine 219, and cysteine 230/cysteine 255. Histidine 72 functions as the Charge relay system in the catalytic mechanism. Serine 100 carries O-linked (GalNAc...) serine glycosylation. Asparagine 109 and asparagine 122 each carry an N-linked (GlcNAc...) asparagine glycan. Residue aspartate 138 is the Charge relay system of the active site. Serine 234 (charge relay system) is an active-site residue.

It belongs to the peptidase S1 family. Kallikrein subfamily. Submaxillary and sublingual salivary glands.

It localises to the secreted. Its activity is regulated as follows. Strongly inhibited by aprotinin, moderately inhibited by secretory leukoprotease inhibitor, the Kunitz-type soybean trypsin inhibitor, and leupeptin, and not inhibited by urinary trypsin inhibitor or alpha-1 protease inhibitor. In terms of biological role, has kallikrein-like activity, converts kininogens to kinins, and has dilatory effects on the blood vessel walls. Shows highest activity toward Pro-Phe-Arg-MCA and Boc-Val-Leu-Lys-MCA in vitro. Has preference for Arg and Lys in position P1 and hydrophobic residues in position P2. This Blarina brevicauda (Northern short-tailed shrew) protein is Blarina toxin (BTX).